Here is a 188-residue protein sequence, read N- to C-terminus: Pro-adrenomedullin (188 aa).

Residues 1 to 21 (MKLVPVALMYLGSLAFLGADT) form the signal peptide. The residue at position 41 (arginine 41) is an Arginine amide. Residues 45–92 (ELRLSSSYPTGIADLKAGPAQTVIRPQDVKGSSRSPQASIPDAARIRV) constitute a propeptide that is removed on maturation. The cysteines at positions 110 and 115 are disulfide-linked. Residues 131–177 (DKDGVAPRSKISPQGYGRRRRRSLPEASLGRTLRSQEPQAHGAPASP) form a disordered region. Tyrosine 146 is modified (tyrosine amide). The propeptide at 153-188 (SLPEASLGRTLRSQEPQAHGAPASPAHQVLATLFRI) is preproAM C-terminal fragment.

Belongs to the adrenomedullin family. As to expression, highly expressed in adrenal glands, lung and kidney.

It localises to the secreted. Functionally, adrenomedullin/ADM and proadrenomedullin N-20 terminal peptide/PAMP are peptide hormones that act as potent hypotensive and vasodilatator agents. Numerous actions have been reported most related to the physiologic control of fluid and electrolyte homeostasis. ADM function is mediated by the CALCRL-RAMP2 and CALCRL-RAMP3 receptor complexes with ADM showing the highest potency for the CALCRL-RAMP2 complex. This chain is Pro-adrenomedullin (ADM), found in Sus scrofa (Pig).